The following is a 579-amino-acid chain: Golvesin (579 aa).

The segment at 1 to 75 is required for targeting to the plasma membrane; the sequence is MTSVNEHSLL…NNNNNNNNNN (75 aa). The tract at residues 1 to 79 is disordered; it reads MTSVNEHSLL…NNNNNNSNTG (79 aa). The Lumenal segment spans residues 1-94; sequence MTSVNEHSLL…KKKKWNFRKK (94 aa). Residues 11–77 show a composition bias toward low complexity; the sequence is INNNENNDNN…NNNNNNNNSN (67 aa). A helical; Signal-anchor for type III membrane protein membrane pass occupies residues 95 to 115; that stretch reads ILPMIVILIITAIVVCLVVFS. The tract at residues 95–118 is required for membrane targeting; it reads ILPMIVILIITAIVVCLVVFSLPF. At 116–578 the chain is on the cytoplasmic side; the sequence is LPFDSSNTIY…SNDFVIAESP (463 aa). Residues 559-579 form a required for transfer to endosomes and contractile vacuoles; the protein is trapped in the Golgi region; that stretch reads WPSSKGIPGFSNDFVIAESPE.

It is found in the contractile vacuole membrane. The protein localises to the endosome membrane. The protein resides in the golgi apparatus membrane. This is Golvesin (gol) from Dictyostelium discoideum (Social amoeba).